A 125-amino-acid polypeptide reads, in one-letter code: S-adenosylmethionine decarboxylase proenzyme (125 aa).

Ser71 serves as the catalytic Schiff-base intermediate with substrate; via pyruvic acid. Ser71 is modified (pyruvic acid (Ser); by autocatalysis). Catalysis depends on His76, which acts as the Proton acceptor; for processing activity. Residue Cys91 is the Proton donor; for catalytic activity of the active site.

The protein belongs to the prokaryotic AdoMetDC family. Type 1 subfamily. Heterotetramer of two alpha and two beta chains arranged as a dimer of alpha/beta heterodimers. The cofactor is pyruvate. Post-translationally, is synthesized initially as an inactive proenzyme. Formation of the active enzyme involves a self-maturation process in which the active site pyruvoyl group is generated from an internal serine residue via an autocatalytic post-translational modification. Two non-identical subunits are generated from the proenzyme in this reaction, and the pyruvate is formed at the N-terminus of the alpha chain, which is derived from the carboxyl end of the proenzyme. The post-translation cleavage follows an unusual pathway, termed non-hydrolytic serinolysis, in which the side chain hydroxyl group of the serine supplies its oxygen atom to form the C-terminus of the beta chain, while the remainder of the serine residue undergoes an oxidative deamination to produce ammonia and the pyruvoyl group blocking the N-terminus of the alpha chain.

The enzyme catalyses S-adenosyl-L-methionine + H(+) = S-adenosyl 3-(methylsulfanyl)propylamine + CO2. It functions in the pathway amine and polyamine biosynthesis; S-adenosylmethioninamine biosynthesis; S-adenosylmethioninamine from S-adenosyl-L-methionine: step 1/1. Its function is as follows. Catalyzes the decarboxylation of S-adenosylmethionine to S-adenosylmethioninamine (dcAdoMet), the propylamine donor required for the synthesis of the polyamines spermine and spermidine from the diamine putrescine. The sequence is that of S-adenosylmethionine decarboxylase proenzyme from Pyrobaculum islandicum (strain DSM 4184 / JCM 9189 / GEO3).